Reading from the N-terminus, the 780-residue chain is ATP-dependent 6-phosphofructokinase, liver type (780 aa).

Ala2 is subject to N-acetylalanine. The interval 2–390 (ATVDLEKLRM…NWKIYKLLAH (389 aa)) is N-terminal catalytic PFK domain 1. Residues Gly25, 88–89 (RC), and 118–121 (GDGS) each bind ATP. A Mg(2+)-binding site is contributed by Asp119. Substrate is bound by residues 164 to 166 (SID), Arg201, 208 to 210 (MGR), Glu264, Arg292, and 298 to 301 (HVQR). Asp166 (proton acceptor) is an active-site residue. Ser377 carries the post-translational modification Phosphoserine. The tract at residues 391 to 400 (QKVSKEKSNF) is interdomain linker. The C-terminal regulatory PFK domain 2 stretch occupies residues 401–780 (SLAILNVGAP…RRTLSIDKGF (380 aa)). Beta-D-fructose 2,6-bisphosphate-binding positions include Arg470, 527-531 (TISNN), Arg565, 572-574 (MGG), and Glu628. Ser529 is a glycosylation site (O-linked (GlcNAc) serine). Tyr640 carries the phosphotyrosine modification. Beta-D-fructose 2,6-bisphosphate is bound by residues Arg654, 660–663 (HLQQ), and Arg734. A Phosphoserine modification is found at Ser775.

The protein belongs to the phosphofructokinase type A (PFKA) family. ATP-dependent PFK group I subfamily. Eukaryotic two domain clade 'E' sub-subfamily. In terms of assembly, homo- and heterotetramers. Phosphofructokinase (PFK) enzyme functions as a tetramer composed of different combinations of 3 types of subunits, called PFKM (M), PFKL (L) and PFKP (P). The composition of the PFK tetramer differs according to the tissue type it is present in. The kinetic and regulatory properties of the tetrameric enzyme are dependent on the subunit composition, hence can vary across tissues. The cofactor is Mg(2+). Post-translationally, glcNAcylation at Ser-529 by OGT decreases enzyme activity, leading to redirect glucose flux through the oxidative pentose phosphate pathway. Glycosylation is stimulated by both hypoxia and glucose deprivation.

Its subcellular location is the cytoplasm. The catalysed reaction is beta-D-fructose 6-phosphate + ATP = beta-D-fructose 1,6-bisphosphate + ADP + H(+). It participates in carbohydrate degradation; glycolysis; D-glyceraldehyde 3-phosphate and glycerone phosphate from D-glucose: step 3/4. Its activity is regulated as follows. Allosterically activated by ADP, AMP, or fructose 2,6-bisphosphate, and allosterically inhibited by ATP or citrate. GlcNAcylation by OGT overcomes allosteric regulation. In terms of biological role, catalyzes the phosphorylation of D-fructose 6-phosphate to fructose 1,6-bisphosphate by ATP, the first committing step of glycolysis. Negatively regulates the phagocyte oxidative burst in response to bacterial infection by controlling cellular NADPH biosynthesis and NADPH oxidase-derived reactive oxygen species. Upon macrophage activation, drives the metabolic switch toward glycolysis, thus preventing glucose turnover that produces NADPH via pentose phosphate pathway. The polypeptide is ATP-dependent 6-phosphofructokinase, liver type (Pfkl) (Rattus norvegicus (Rat)).